The chain runs to 108 residues: Zinc finger protein 475 (108 aa).

2 consecutive C2HC/C3H-type zinc fingers follow at residues P6–N35 and Q79–K108. Zn(2+) is bound by residues C10, C13, H25, C29, C83, C86, H98, and C102.

It depends on Zn(2+) as a cofactor.

The protein is Zinc finger protein 475 of Homo sapiens (Human).